Reading from the N-terminus, the 884-residue chain is Translation initiation factor IF-2 (884 aa).

2 disordered regions span residues Asp42 to Val62 and Glu123 to Lys254. The segment covering Pro194–Ala212 has biased composition (basic and acidic residues). The segment covering Glu234 to Gly248 has biased composition (low complexity). A tr-type G domain is found at Lys384–Lys553. The tract at residues Gly393–Thr400 is G1. Gly393–Thr400 is a GTP binding site. Positions Gly418–His422 are G2. A G3 region spans residues Asp439–Gly442. GTP is bound by residues Asp439–His443 and Asn493–Asp496. The G4 stretch occupies residues Asn493–Asp496. Positions Ser529–Lys531 are G5.

The protein belongs to the TRAFAC class translation factor GTPase superfamily. Classic translation factor GTPase family. IF-2 subfamily.

It localises to the cytoplasm. Its function is as follows. One of the essential components for the initiation of protein synthesis. Protects formylmethionyl-tRNA from spontaneous hydrolysis and promotes its binding to the 30S ribosomal subunits. Also involved in the hydrolysis of GTP during the formation of the 70S ribosomal complex. In Geobacter metallireducens (strain ATCC 53774 / DSM 7210 / GS-15), this protein is Translation initiation factor IF-2.